A 288-amino-acid polypeptide reads, in one-letter code: Pantothenate synthetase (288 aa).

30-37 (MGALHEGH) lines the ATP pocket. Residue His-37 is the Proton donor of the active site. Gln-61 provides a ligand contact to (R)-pantoate. Gln-61 provides a ligand contact to beta-alanine. Position 147–150 (147–150 (GEKD)) interacts with ATP. Gln-153 is a (R)-pantoate binding site. ATP contacts are provided by residues Val-176 and 184–187 (ISSR).

Belongs to the pantothenate synthetase family. In terms of assembly, homodimer.

It localises to the cytoplasm. The catalysed reaction is (R)-pantoate + beta-alanine + ATP = (R)-pantothenate + AMP + diphosphate + H(+). It functions in the pathway cofactor biosynthesis; (R)-pantothenate biosynthesis; (R)-pantothenate from (R)-pantoate and beta-alanine: step 1/1. Catalyzes the condensation of pantoate with beta-alanine in an ATP-dependent reaction via a pantoyl-adenylate intermediate. This chain is Pantothenate synthetase, found in Chlorobium phaeobacteroides (strain BS1).